A 183-amino-acid polypeptide reads, in one-letter code: Calcium-binding protein M (183 aa).

Glycine 2 carries the N-myristoyl glycine lipid modification. 4 consecutive EF-hand domains span residues glutamate 25–asparagine 60, tyrosine 61–glycine 96, serine 97–valine 132, and aspartate 142–leucine 177. 13 residues coordinate Ca(2+): aspartate 74, aspartate 76, serine 78, threonine 80, glutamate 85, aspartate 110, aspartate 112, serine 114, glutamate 121, aspartate 155, aspartate 157, asparagine 159, and glutamate 166.

Belongs to the recoverin family.

The chain is Calcium-binding protein M (cbpM) from Dictyostelium discoideum (Social amoeba).